The primary structure comprises 98 residues: Defensin-A (98 aa).

The signal sequence occupies residues 1–18 (MKSITVICFLALCTVAIT). Residues 19-58 (SAYPQEPVLADEARPFANSLFDELPEETYQAAVENFRLKR) constitute a propeptide that is removed on maturation. 3 disulfides stabilise this stretch: cysteine 61-cysteine 88, cysteine 74-cysteine 94, and cysteine 78-cysteine 96.

Belongs to the invertebrate defensin family. Type 1 subfamily.

The protein resides in the secreted. Functionally, antibacterial peptide mostly active against Gram-positive bacteria. Has activity against the bacteria Gram-negative E.cloacae beta12. This chain is Defensin-A (DEFA), found in Aedes aegypti (Yellowfever mosquito).